A 60-amino-acid polypeptide reads, in one-letter code: MSSDCGNCDCADKSQCTKKGFQIDGIVETSYEMGHGGDVSLENDCKCGPNCQCGTCTCHT.

The protein belongs to the metallothionein superfamily. Type 15 family.

In terms of biological role, metallothioneins have a high content of cysteine residues that bind various heavy metals. The chain is Metallothionein-like protein EMB30 (EMB30) from Picea glauca (White spruce).